The primary structure comprises 932 residues: RNA-binding protein 12 (932 aa).

The segment at 97-116 is disordered; that stretch reads IPPANASRSGPPPSSGMSGR. Low complexity predominate over residues 98-116; sequence PPANASRSGPPPSSGMSGR. The RRM 1 domain occupies 304 to 379; the sequence is LYVSVHGMPF…RYVEVSPATE (76 aa). 2 positions are modified to phosphoserine: Ser352 and Ser375. The interval 393 to 424 is disordered; the sequence is QNMGPSGQSHPPPQTLPRSKSPSGQKRSRSRS. Over residues 408 to 417 the composition is skewed to polar residues; sequence LPRSKSPSGQ. A phosphoserine mark is found at Ser420, Ser422, and Ser424. An RRM 2 domain is found at 430–507; sequence FCVYLKGLPF…RFIQVHPITK (78 aa). Position 525 is a phosphoserine (Ser525). Residues 717–734 show a composition bias toward low complexity; it reads NGPPFNFPGNFGGSNAFG. A disordered region spans residues 717-853; the sequence is NGPPFNFPGN…PGFASSSGKP (137 aa). Over residues 783–811 the composition is skewed to gly residues; that stretch reads SGFGGGPQNFGNGPGSLGGPPGFGSGPPG. Over residues 824–836 the composition is skewed to pro residues; sequence AFGPGPGPGPGPG. Positions 856 to 932 constitute an RRM 3 domain; sequence TVIKVQNMPF…GSRKVKLVLG (77 aa).

The protein localises to the nucleus. The polypeptide is RNA-binding protein 12 (RBM12) (Macaca mulatta (Rhesus macaque)).